A 297-amino-acid chain; its full sequence is Heme A synthase (297 aa).

The Cytoplasmic portion of the chain corresponds to 1–6; that stretch reads MHKRLK. The helical transmembrane segment at 7-27 threads the bilayer; that stretch reads IYSVITSIGVLIVLLQGALVT. The Extracellular segment spans residues 28–62; that stretch reads KTGSGEGCGATWPLCFGEVIPTNPAIETIIEYSHR. Cysteine 35 and cysteine 42 are oxidised to a cystine. Glutamate 58 is a catalytic residue. Residue histidine 61 coordinates heme o. Residues 63-83 form a helical membrane-spanning segment; that stretch reads IVSGLVGAMIIILAIWAWKQL. The Cytoplasmic portion of the chain corresponds to 84–93; that stretch reads KHMREAKALS. A helical transmembrane segment spans residues 94–114; sequence FAAVILIIFQGLLGAGAVVFG. At 115-118 the chain is on the extracellular side; sequence QSKA. A helical membrane pass occupies residues 119 to 139; that stretch reads ILALHFGISAMSLAAVVLLTI. Histidine 123 provides a ligand contact to heme o. At 140 to 156 the chain is on the cytoplasmic side; sequence LAFEDGREHTMAPKVSR. The helical transmembrane segment at 157 to 177 threads the bilayer; that stretch reads GFKYYVFFVITYCYAVIYSGA. Residues 178-210 are Extracellular-facing; that stretch reads YVKHSEATLACAGFPLCNGQIFPGLYGPVGAHY. Cysteine 188 and cysteine 194 are joined by a disulfide. The helical transmembrane segment at 211–231 threads the bilayer; that stretch reads FHRVVGTILLLFLLILMIWTL. A heme b-binding site is contributed by histidine 212. The Cytoplasmic portion of the chain corresponds to 232-242; it reads SRYRHYRVLTW. A helical membrane pass occupies residues 243–263; sequence TAVLSFLLVVGQFISGISIVF. The Extracellular segment spans residues 264-271; sequence TQNALSVG. The chain crosses the membrane as a helical span at residues 272-292; sequence LIHALIISILFSALSYMTMII. A heme b-binding site is contributed by histidine 274. Residues 293-297 are Cytoplasmic-facing; that stretch reads TRPSH.

The protein belongs to the COX15/CtaA family. Type 1 subfamily. Interacts with CtaB. The cofactor is heme b.

It localises to the cell membrane. The catalysed reaction is Fe(II)-heme o + 2 A + H2O = Fe(II)-heme a + 2 AH2. Its pathway is porphyrin-containing compound metabolism; heme A biosynthesis; heme A from heme O: step 1/1. Catalyzes the conversion of heme O to heme A by two successive hydroxylations of the methyl group at C8. The first hydroxylation forms heme I, the second hydroxylation results in an unstable dihydroxymethyl group, which spontaneously dehydrates, resulting in the formyl group of heme A. The polypeptide is Heme A synthase (Alkalihalophilus pseudofirmus (strain ATCC BAA-2126 / JCM 17055 / OF4) (Bacillus pseudofirmus)).